The sequence spans 236 residues: 1-(5-phosphoribosyl)-5-[(5-phosphoribosylamino)methylideneamino] imidazole-4-carboxamide isomerase (236 aa).

D8 serves as the catalytic Proton acceptor. The active-site Proton donor is D129.

The protein belongs to the HisA/HisF family.

The protein localises to the cytoplasm. It catalyses the reaction 1-(5-phospho-beta-D-ribosyl)-5-[(5-phospho-beta-D-ribosylamino)methylideneamino]imidazole-4-carboxamide = 5-[(5-phospho-1-deoxy-D-ribulos-1-ylimino)methylamino]-1-(5-phospho-beta-D-ribosyl)imidazole-4-carboxamide. It participates in amino-acid biosynthesis; L-histidine biosynthesis; L-histidine from 5-phospho-alpha-D-ribose 1-diphosphate: step 4/9. This is 1-(5-phosphoribosyl)-5-[(5-phosphoribosylamino)methylideneamino] imidazole-4-carboxamide isomerase from Methanocorpusculum labreanum (strain ATCC 43576 / DSM 4855 / Z).